The following is a 234-amino-acid chain: NLP effector protein 10 (234 aa).

An N-terminal signal peptide occupies residues 1–17 (MFKTFIIAAVAVATVRA). A glycan (N-linked (GlcNAc...) asparagine) is linked at asparagine 65. The short motif at 101–111 (AIMYSWYFPKD) is the Conserved undecapeptide motif I element. The Hepta-peptide GHRHDWE motif II motif lies at 118 to 124 (GHRHDWE).

This sequence belongs to the Necrosis inducing protein (NPP1) family.

It localises to the secreted. Functionally, secreted effector that contributes moderately to virulence during infection by P.capsici. Does not cause visible reaction of C.annuum for several days after inoculation, but by 7 days after inoculation, small necrotic lesions become visible. Leads only to chlorotic areas, without necrosis at 7 days after non-host N.benthamiana leaves infection. The polypeptide is NLP effector protein 10 (Phytophthora capsici).